Here is a 350-residue protein sequence, read N- to C-terminus: tRNA uridine(34) hydroxylase (350 aa).

Residues 146–240 form the Rhodanese domain; sequence DDPDALFIDM…YARKAREQGL (95 aa). Cysteine 200 functions as the Cysteine persulfide intermediate in the catalytic mechanism.

This sequence belongs to the TrhO family.

It carries out the reaction uridine(34) in tRNA + AH2 + O2 = 5-hydroxyuridine(34) in tRNA + A + H2O. Catalyzes oxygen-dependent 5-hydroxyuridine (ho5U) modification at position 34 in tRNAs, the first step in 5-carboxymethoxyuridine (cmo5U) biosynthesis. May be part of an alternate pathway, which is able to bypass cmo5U biogenesis in a subset of tRNAs under aerobic conditions. This chain is tRNA uridine(34) hydroxylase, found in Escherichia coli O127:H6 (strain E2348/69 / EPEC).